Reading from the N-terminus, the 619-residue chain is Serine/threonine-protein kinase pkn1 (619 aa).

A Protein kinase domain is found at 15 to 302; it reads YRILYRKGQS…SSQNLPQAVL (288 aa). 21–29 is a binding site for ATP; that stretch reads KGQSLWSED. Glu-141 serves as the catalytic Proton acceptor.

This sequence belongs to the protein kinase superfamily. Ser/Thr protein kinase family. Post-translationally, autophosphorylated on serine and threonine residues.

The catalysed reaction is L-seryl-[protein] + ATP = O-phospho-L-seryl-[protein] + ADP + H(+). It catalyses the reaction L-threonyl-[protein] + ATP = O-phospho-L-threonyl-[protein] + ADP + H(+). Functionally, together with the serine/threonine kinase PknD, may play a role in the specific interactions with host proteins during intracellular growth. This Chlamydia pneumoniae (Chlamydophila pneumoniae) protein is Serine/threonine-protein kinase pkn1 (pkn1).